Reading from the N-terminus, the 317-residue chain is uncharacterized protein (317 aa).

The next 7 membrane-spanning stretches (helical) occupy residues 18–38 (WWII…LIII), 58–78 (IIFG…GFIF), 92–112 (FLGH…WWSV), 130–150 (LFAT…AFGV), 165–185 (QPLS…KGEL), 202–222 (LAFL…LSTV), and 253–273 (LWGG…LMVN).

This sequence belongs to the CbiQ family.

The protein resides in the cell membrane. This is an uncharacterized protein from Mycoplasma pneumoniae (strain ATCC 29342 / M129 / Subtype 1) (Mycoplasmoides pneumoniae).